A 181-amino-acid chain; its full sequence is Acireductone dioxygenase (181 aa).

4 residues coordinate Fe(2+): His97, His99, Glu103, and His141. Ni(2+) is bound by residues His97, His99, Glu103, and His141.

This sequence belongs to the acireductone dioxygenase (ARD) family. Monomer. Requires Fe(2+) as cofactor. Ni(2+) is required as a cofactor.

It catalyses the reaction 1,2-dihydroxy-5-(methylsulfanyl)pent-1-en-3-one + O2 = 3-(methylsulfanyl)propanoate + CO + formate + 2 H(+). The enzyme catalyses 1,2-dihydroxy-5-(methylsulfanyl)pent-1-en-3-one + O2 = 4-methylsulfanyl-2-oxobutanoate + formate + 2 H(+). The protein operates within amino-acid biosynthesis; L-methionine biosynthesis via salvage pathway; L-methionine from S-methyl-5-thio-alpha-D-ribose 1-phosphate: step 5/6. Functionally, catalyzes 2 different reactions between oxygen and the acireductone 1,2-dihydroxy-3-keto-5-methylthiopentene (DHK-MTPene) depending upon the metal bound in the active site. Fe-containing acireductone dioxygenase (Fe-ARD) produces formate and 2-keto-4-methylthiobutyrate (KMTB), the alpha-ketoacid precursor of methionine in the methionine recycle pathway. Ni-containing acireductone dioxygenase (Ni-ARD) produces methylthiopropionate, carbon monoxide and formate, and does not lie on the methionine recycle pathway. This chain is Acireductone dioxygenase, found in Pseudomonas syringae pv. syringae (strain B728a).